A 273-amino-acid chain; its full sequence is Putative carboxymethylenebutenolidase (273 aa).

Catalysis depends on residues Cys-130, Asp-191, and His-223.

Belongs to the dienelactone hydrolase family.

It catalyses the reaction 2-(5-oxo-2,5-dihydrofuran-2-ylidene)acetate + H2O = 4-oxohex-2-enedioate + H(+). This Saccharomyces cerevisiae (strain ATCC 204508 / S288c) (Baker's yeast) protein is Putative carboxymethylenebutenolidase.